The primary structure comprises 574 residues: Proline--tRNA ligase (574 aa).

The protein belongs to the class-II aminoacyl-tRNA synthetase family. ProS type 1 subfamily. Homodimer.

Its subcellular location is the cytoplasm. The enzyme catalyses tRNA(Pro) + L-proline + ATP = L-prolyl-tRNA(Pro) + AMP + diphosphate. Functionally, catalyzes the attachment of proline to tRNA(Pro) in a two-step reaction: proline is first activated by ATP to form Pro-AMP and then transferred to the acceptor end of tRNA(Pro). As ProRS can inadvertently accommodate and process non-cognate amino acids such as alanine and cysteine, to avoid such errors it has two additional distinct editing activities against alanine. One activity is designated as 'pretransfer' editing and involves the tRNA(Pro)-independent hydrolysis of activated Ala-AMP. The other activity is designated 'posttransfer' editing and involves deacylation of mischarged Ala-tRNA(Pro). The misacylated Cys-tRNA(Pro) is not edited by ProRS. This Fervidobacterium nodosum (strain ATCC 35602 / DSM 5306 / Rt17-B1) protein is Proline--tRNA ligase.